The following is a 73-amino-acid chain: Mucroporin-like peptide (73 aa).

Residues 1–22 form the signal peptide; the sequence is MKVKCLLAVFLIVLIAAEHCQA. Lys-38 is subject to Lysine amide. The propeptide occupies 44-73; it reads ELGTQFQPRQKNFMRREVDLERLFAEMPDY.

This sequence belongs to the non-disulfide-bridged peptide (NDBP) superfamily. Short antimicrobial peptide (group 4) family. Expressed by the venom gland.

The protein localises to the secreted. The protein resides in the target cell membrane. In terms of biological role, cationic host defense peptide that have antibacterial activity by breaking membranes. Is more effective on Gram-positive than on Gram-negative bacteria. This is Mucroporin-like peptide from Lychas mucronatus (Chinese swimming scorpion).